Consider the following 421-residue polypeptide: Synaptotagmin-1 (421 aa).

The segment at 1–40 (MVSESHHEALAAPPATTVAAAPPSNVTEPASPGGGGGKED) is disordered. At 1–60 (MVSESHHEALAAPPATTVAAAPPSNVTEPASPGGGGGKEDAFSKLKEKFMNELNKIPLPP) the chain is on the vesicular side. Positions 10–23 (LAAPPATTVAAAPP) are enriched in low complexity. Asparagine 25 is a glycosylation site (N-linked (GlcNAc...) asparagine). The helical transmembrane segment at 61–81 (WALIAIAIVAVLLILTCCFCL) threads the bilayer. 5 S-palmitoyl cysteine lipidation sites follow: cysteine 77, cysteine 78, cysteine 80, cysteine 82, and cysteine 85. Topologically, residues 82–421 (CKKCLFKKKN…EVDAMLAVKK (340 aa)) are cytoplasmic. The tract at residues 94-139 (KGKEKGGKNAINMKDVKDLGKTMKDQDDDAETGLTDGEEKEEPKEV) is disordered. Residues 107–118 (KDVKDLGKTMKD) show a composition bias toward basic and acidic residues. Residues 119–133 (QDDDAETGLTDGEEK) are compositionally biased toward acidic residues. Residues 135 to 381 (EPKEVEKLGK…AIGKVFVGYN (247 aa)) are phospholipid binding. C2 domains are found at residues 141 to 260 (KLGK…EEWR) and 272 to 405 (KLGD…AQWH). Positions 171, 172, 178, 230, 231, 232, 235, 236, 238, 303, 309, 363, 365, and 371 each coordinate Ca(2+).

The protein belongs to the synaptotagmin family. Homotetramer. Ca(2+) serves as cofactor.

The protein resides in the cytoplasmic vesicle. Its subcellular location is the secretory vesicle membrane. It is found in the secretory vesicle. It localises to the synaptic vesicle membrane. The protein localises to the chromaffin granule membrane. The protein resides in the cytoplasm. Calcium sensor that participates in triggering neurotransmitter release at the synapse. May have a regulatory role in the membrane interactions during trafficking of synaptic vesicles at the active zone of the synapse. It binds acidic phospholipids with a specificity that requires the presence of both an acidic head group and a diacyl backbone. May play a role in dendrite formation by melanocytes. May play a role in regulating the secretion of hormones relevant to the reproduction and egg-laying of female geese. The sequence is that of Synaptotagmin-1 from Anser cygnoides (Swan goose).